The following is a 152-amino-acid chain: Nucleoside diphosphate kinase B (152 aa).

The interaction with AKAP13 stretch occupies residues 1–66; sequence MANLERTFIA…DRPFFPGLVK (66 aa). Residues Lys12, Phe60, Arg88, Thr94, Arg105, and Asn115 each coordinate ATP. His118 (pros-phosphohistidine intermediate) is an active-site residue.

The protein belongs to the NDK family. As to quaternary structure, hexamer of two different chains: An and B (A6, A5B, A4B2, A3B3, A2B4, AB5, B6). Interacts with CAPN8. Interacts with AKAP13. Interacts with ITGB1BP1 (via C-terminal domain region). Interacts with BCL2L10. It depends on Mg(2+) as a cofactor. As to expression, ubiquitously expressed.

It localises to the cytoplasm. Its subcellular location is the cell projection. The protein localises to the lamellipodium. The protein resides in the ruffle. It is found in the perinuclear region. It localises to the nucleus. The catalysed reaction is a 2'-deoxyribonucleoside 5'-diphosphate + ATP = a 2'-deoxyribonucleoside 5'-triphosphate + ADP. It catalyses the reaction a ribonucleoside 5'-diphosphate + ATP = a ribonucleoside 5'-triphosphate + ADP. The enzyme catalyses ATP + protein L-histidine = ADP + protein N-phospho-L-histidine.. Its function is as follows. Major role in the synthesis of nucleoside triphosphates other than ATP. The ATP gamma phosphate is transferred to the NDP beta phosphate via a ping-pong mechanism, using a phosphorylated active-site intermediate. Negatively regulates Rho activity by interacting with AKAP13/LBC. Acts as a transcriptional activator of the MYC gene; binds DNA non-specifically. Binds to both single-stranded guanine- and cytosine-rich strands within the nuclease hypersensitive element (NHE) III(1) region of the MYC gene promoter. Does not bind to duplex NHE III(1). Has G-quadruplex (G4) DNA-binding activity, which is independent of its nucleotide-binding and kinase activity. Binds both folded and unfolded G4 with similar low nanomolar affinities. Stabilizes folded G4s regardless of whether they are prefolded or not. Exhibits histidine protein kinase activity. This is Nucleoside diphosphate kinase B (NME2) from Homo sapiens (Human).